The chain runs to 632 residues: Actin-related protein 8 (632 aa).

A compositionally biased stretch (basic and acidic residues) spans 1 to 30; the sequence is MTQAEREQENGKEKEKEREKEKEKEKEQRG. The segment at 1–43 is disordered; it reads MTQAEREQENGKEKEKEREKEKEKEKEQRGIKRPIAPPVIPEP. Position 288–291 (288–291) interacts with ATP; the sequence is DVGD. Disordered regions lie at residues 410–429 and 434–494; these read MTSLQHRSQGDPEDPHDEHY and QSKQ…GGAE. The segment covering 434–443 has biased composition (low complexity); it reads QSKQDQSSKA.

Belongs to the actin family. ARP8 subfamily. In terms of assembly, component of the chromatin remodeling INO80 complex; specifically part of a complex module associated with the DBINO domain of INO80. Exists as monomers and dimers, but the dimer is most probably the biologically relevant form required for stable interactions with histones that exploits the twofold symmetry of the nucleosome core.

The protein localises to the nucleus. The protein resides in the chromosome. Plays an important role in the functional organization of mitotic chromosomes. Exhibits low basal ATPase activity, and unable to polymerize. Functionally, proposed core component of the chromatin remodeling INO80 complex which is involved in transcriptional regulation, DNA replication and probably DNA repair. Required for the recruitment of INO80 (and probably the INO80 complex) to sites of DNA damage Strongly prefer nucleosomes and H3-H4 tetramers over H2A-H2B dimers, suggesting it may act as a nucleosome recognition module within the complex. This chain is Actin-related protein 8 (actr8), found in Salmo salar (Atlantic salmon).